The following is a 525-amino-acid chain: Glutamate synthase large subunit-like protein YerD (525 aa).

The chain crosses the membrane as a helical span at residues 4 to 24 (IIIALIAFIIGIIAIPIVLFA).

Belongs to the glutamate synthase family.

It localises to the cell membrane. The polypeptide is Glutamate synthase large subunit-like protein YerD (yerD) (Bacillus subtilis (strain 168)).